The following is a 322-amino-acid chain: Pantothenate kinase (322 aa).

Residue 100–107 (GSVAVGKS) coordinates ATP.

The protein belongs to the prokaryotic pantothenate kinase family.

The protein localises to the cytoplasm. It catalyses the reaction (R)-pantothenate + ATP = (R)-4'-phosphopantothenate + ADP + H(+). Its pathway is cofactor biosynthesis; coenzyme A biosynthesis; CoA from (R)-pantothenate: step 1/5. In Brucella canis (strain ATCC 23365 / NCTC 10854 / RM-666), this protein is Pantothenate kinase.